The sequence spans 210 residues: Imidazole glycerol phosphate synthase subunit HisH (210 aa).

The Glutamine amidotransferase type-1 domain maps to 1 to 210; that stretch reads MIAILDYGMG…KLLENFIRFI (210 aa). The active-site Nucleophile is the Cys79. Catalysis depends on residues His191 and Glu193.

As to quaternary structure, heterodimer of HisH and HisF.

Its subcellular location is the cytoplasm. It carries out the reaction 5-[(5-phospho-1-deoxy-D-ribulos-1-ylimino)methylamino]-1-(5-phospho-beta-D-ribosyl)imidazole-4-carboxamide + L-glutamine = D-erythro-1-(imidazol-4-yl)glycerol 3-phosphate + 5-amino-1-(5-phospho-beta-D-ribosyl)imidazole-4-carboxamide + L-glutamate + H(+). The catalysed reaction is L-glutamine + H2O = L-glutamate + NH4(+). Its pathway is amino-acid biosynthesis; L-histidine biosynthesis; L-histidine from 5-phospho-alpha-D-ribose 1-diphosphate: step 5/9. In terms of biological role, IGPS catalyzes the conversion of PRFAR and glutamine to IGP, AICAR and glutamate. The HisH subunit catalyzes the hydrolysis of glutamine to glutamate and ammonia as part of the synthesis of IGP and AICAR. The resulting ammonia molecule is channeled to the active site of HisF. The chain is Imidazole glycerol phosphate synthase subunit HisH from Leptospira interrogans serogroup Icterohaemorrhagiae serovar copenhageni (strain Fiocruz L1-130).